A 161-amino-acid polypeptide reads, in one-letter code: 2-C-methyl-D-erythritol 2,4-cyclodiphosphate synthase (161 aa).

A divalent metal cation contacts are provided by Asp-11 and His-13. 4-CDP-2-C-methyl-D-erythritol 2-phosphate-binding positions include 11-13 (DIH) and 37-38 (HS). His-45 contributes to the a divalent metal cation binding site. 4-CDP-2-C-methyl-D-erythritol 2-phosphate-binding positions include 59-61 (DIG), 135-138 (TTNE), and Arg-145.

The protein belongs to the IspF family. Homotrimer. Requires a divalent metal cation as cofactor.

The catalysed reaction is 4-CDP-2-C-methyl-D-erythritol 2-phosphate = 2-C-methyl-D-erythritol 2,4-cyclic diphosphate + CMP. It functions in the pathway isoprenoid biosynthesis; isopentenyl diphosphate biosynthesis via DXP pathway; isopentenyl diphosphate from 1-deoxy-D-xylulose 5-phosphate: step 4/6. In terms of biological role, involved in the biosynthesis of isopentenyl diphosphate (IPP) and dimethylallyl diphosphate (DMAPP), two major building blocks of isoprenoid compounds. Catalyzes the conversion of 4-diphosphocytidyl-2-C-methyl-D-erythritol 2-phosphate (CDP-ME2P) to 2-C-methyl-D-erythritol 2,4-cyclodiphosphate (ME-CPP) with a corresponding release of cytidine 5-monophosphate (CMP). This is 2-C-methyl-D-erythritol 2,4-cyclodiphosphate synthase from Synechocystis sp. (strain ATCC 27184 / PCC 6803 / Kazusa).